The sequence spans 421 residues: ATP-dependent RNA helicase RhlB (421 aa).

The Q motif motif lies at 9–37; the sequence is QKFSDFALHPAVIEALEKKGFHNCTPIQA. Positions 40–219 constitute a Helicase ATP-binding domain; that stretch reads LPLTLEGRDV…FEQMNNAEYV (180 aa). 53-60 provides a ligand contact to ATP; it reads AQTGTGKT. A DEAD box motif is present at residues 165 to 168; the sequence is DEAD. A Helicase C-terminal domain is found at 245–390; it reads RLLQTLLEEE…VSKYNPDALM (146 aa). The disordered stretch occupies residues 396 to 421; that stretch reads PLRLTRARPGNGPRRNGPPRNRRRSG. Positions 403-414 are enriched in low complexity; that stretch reads RPGNGPRRNGPP.

The protein belongs to the DEAD box helicase family. RhlB subfamily. Component of the RNA degradosome, which is a multiprotein complex involved in RNA processing and mRNA degradation.

It localises to the cytoplasm. The catalysed reaction is ATP + H2O = ADP + phosphate + H(+). Functionally, DEAD-box RNA helicase involved in RNA degradation. Has RNA-dependent ATPase activity and unwinds double-stranded RNA. This Klebsiella pneumoniae subsp. pneumoniae (strain ATCC 700721 / MGH 78578) protein is ATP-dependent RNA helicase RhlB.